We begin with the raw amino-acid sequence, 1641 residues long: Cortactin-binding protein 2 (1641 aa).

The segment at 1 to 27 (MATDGASCEPDFSRAPEDAAGAPAEAA) is disordered. Residues 119 to 276 (RKMQERMSTQ…EQLKRGNDSK (158 aa)) adopt a coiled-coil conformation. 3 disordered regions span residues 361-433 (SHGD…HPGL), 446-472 (GSNA…PTSR), and 488-588 (ALSR…PQGN). Over residues 385 to 405 (GPSTGSTPDLTSSPTALPSTV) the composition is skewed to polar residues. Position 491 is an asymmetric dimethylarginine (Arg491). Pro residues predominate over residues 497 to 506 (AGAPPRPGAP). Polar residues predominate over residues 576–586 (TVASSPSSLPQ). ANK repeat units lie at residues 702-732 (GRPT…DINY), 736-765 (DGHS…QVNA), 769-798 (NGFT…NINH), 802-831 (GGQT…DRSV), 835-864 (DGWT…PAHG), and 903-933 (EGWT…EPER). Residues 1442-1468 (AWRKVSTSPRKKSGRFSSPTWNKPDLS) form a disordered region. Ser1512 carries the phosphoserine modification. The tract at residues 1544 to 1641 (LRRFDSSGNN…NSRDLEPTQK (98 aa)) is disordered. Composition is skewed to polar residues over residues 1551 to 1562 (GNNPVFSATVNN) and 1570 to 1579 (KEVSPLSSHQ). The span at 1580–1590 (MTERSNSKSKT) shows a compositional bias: basic and acidic residues. A compositionally biased stretch (low complexity) spans 1612-1626 (SQNTKRSSSSSNTRQ).

Interacts with CTTN/cortactin SH3 domain. Interacts with STRN, STRN4/zinedin and MOB4/phocein; this interactions mediate the association with the STRIPAK core complex and may regulate dendritic spine distribution of the STRIPAK complex in hippocampal neurons. Activation of glutamate receptors weakens the interaction with STRN and STRN4.

It localises to the cytoplasm. The protein localises to the cell cortex. Its subcellular location is the cell projection. It is found in the dendritic spine. In terms of biological role, regulates the dendritic spine distribution of CTTN/cortactin in hippocampal neurons, and thus controls dendritic spinogenesis and dendritic spine maintenance. Associates with the striatin-interacting phosphatase and kinase (STRIPAK) core complex to regulate dendritic spine distribution of the STRIPAK complex in hippocampal neurons. The chain is Cortactin-binding protein 2 (CTTNBP2) from Ovis aries (Sheep).